The following is a 749-amino-acid chain: Protein O-mannosyl-transferase 2 (749 aa).

The segment at 1 to 30 (MAASVVKTPKCPRRGSAKEQQSKASPKSNN) is disordered. A helical transmembrane segment spans residues 34-54 (NWHWWILLASVFLITFATRFY). Residues Asn-78, Asn-104, and Asn-117 are each glycosylated (N-linked (GlcNAc...) asparagine). The next 5 helical transmembrane spans lie at 126–146 (YFCTTLGALIMPMGFDTVYDL), 173–193 (ILLDPILLFFMMGSVWGMVKI), 204–224 (SVRWWFWLFLTGTMLSCTISV), 226–246 (FVGLFVVLLVGLHTATELWLI), and 266–286 (IALILWPILLYTLFFYIHLSV). N-linked (GlcNAc...) asparagine glycans are attached at residues Asn-288 and Asn-312. 3 consecutive MIR domains span residues 316–372 (PRDV…IKPH), 382–438 (LQLL…VLIV), and 443–499 (NETV…VEDN). Asn-443 is a glycosylation site (N-linked (GlcNAc...) asparagine). Helical transmembrane passes span 572–592 (IWWSNLVFLALFVAVFLGNAI), 645–665 (LGAAAWLFVGWLLHYLPFWAM), 669–689 (LYFHHYFPALIFNSLLTGVMF), and 703–723 (VLLGGLLSLIVYSFALFSPLA). N-linked (GlcNAc...) asparagine glycosylation occurs at Asn-735.

Belongs to the glycosyltransferase 39 family. As to quaternary structure, interacts with Rt/POMT1.

Its subcellular location is the endoplasmic reticulum membrane. It catalyses the reaction a di-trans,poly-cis-dolichyl beta-D-mannosyl phosphate + L-seryl-[protein] = 3-O-(alpha-D-mannosyl)-L-seryl-[protein] + a di-trans,poly-cis-dolichyl phosphate + H(+). It carries out the reaction a di-trans,poly-cis-dolichyl beta-D-mannosyl phosphate + L-threonyl-[protein] = 3-O-(alpha-D-mannosyl)-L-threonyl-[protein] + a di-trans,poly-cis-dolichyl phosphate + H(+). Its pathway is protein modification; protein glycosylation. Rt/POMT1 and tw/POMT2 function as a protein O-mannosyltransferase in association with each other to generate and maintain normal muscle development. In Drosophila pseudoobscura pseudoobscura (Fruit fly), this protein is Protein O-mannosyl-transferase 2.